Consider the following 270-residue polypeptide: MRTAYYISDGTAITSEVFGHALLSLFTIEFEHITVPFVETEEQAKQVVKKISESFQDDGQRPLVFYTIVNTEVRKIISKSVGINYNFLDQFVAPLEIVLGVPSKPEKHRTHSIHEKTYDIRIEAVNYALANDDGSNLQEYDEADIILVGVSRSGKTPTSLYLALQYGIKAANYPFTEEDMGDILKMPPALKRYKDKMFGLTIEAQRLHQIRSERRANSRYASLQQCRMELREVENLYRKEKIPFLNSTRYSIEEISAKILATTGLQRKKY.

149 to 156 (GVSRSGKT) contacts ADP.

This sequence belongs to the pyruvate, phosphate/water dikinase regulatory protein family. PSRP subfamily.

It catalyses the reaction [pyruvate, water dikinase] + ADP = [pyruvate, water dikinase]-phosphate + AMP + H(+). It carries out the reaction [pyruvate, water dikinase]-phosphate + phosphate + H(+) = [pyruvate, water dikinase] + diphosphate. Bifunctional serine/threonine kinase and phosphorylase involved in the regulation of the phosphoenolpyruvate synthase (PEPS) by catalyzing its phosphorylation/dephosphorylation. The protein is Putative phosphoenolpyruvate synthase regulatory protein of Pseudoalteromonas atlantica (strain T6c / ATCC BAA-1087).